The chain runs to 152 residues: UPF0266 membrane protein plu2700 (152 aa).

A run of 3 helical transmembrane segments spans residues 6 to 26, 45 to 65, and 67 to 87; these read IALT…EFVV, IDAL…ITVY, and SRLT…IAYI.

Belongs to the UPF0266 family.

The protein resides in the cell inner membrane. This Photorhabdus laumondii subsp. laumondii (strain DSM 15139 / CIP 105565 / TT01) (Photorhabdus luminescens subsp. laumondii) protein is UPF0266 membrane protein plu2700.